Consider the following 369-residue polypeptide: Anhydro-N-acetylmuramic acid kinase (369 aa).

ATP is bound at residue 12–19; the sequence is GTSLDGVD.

This sequence belongs to the anhydro-N-acetylmuramic acid kinase family.

The enzyme catalyses 1,6-anhydro-N-acetyl-beta-muramate + ATP + H2O = N-acetyl-D-muramate 6-phosphate + ADP + H(+). It participates in amino-sugar metabolism; 1,6-anhydro-N-acetylmuramate degradation. The protein operates within cell wall biogenesis; peptidoglycan recycling. In terms of biological role, catalyzes the specific phosphorylation of 1,6-anhydro-N-acetylmuramic acid (anhMurNAc) with the simultaneous cleavage of the 1,6-anhydro ring, generating MurNAc-6-P. Is required for the utilization of anhMurNAc either imported from the medium or derived from its own cell wall murein, and thus plays a role in cell wall recycling. The sequence is that of Anhydro-N-acetylmuramic acid kinase from Escherichia coli O139:H28 (strain E24377A / ETEC).